The chain runs to 387 residues: uncharacterized protein (387 aa).

Belongs to the geranylgeranyl reductase family. ChlP subfamily.

This is an uncharacterized protein from Methanocaldococcus jannaschii (strain ATCC 43067 / DSM 2661 / JAL-1 / JCM 10045 / NBRC 100440) (Methanococcus jannaschii).